Here is a 1053-residue protein sequence, read N- to C-terminus: Putative ABC transporter C family member 15 (1053 aa).

The 180-residue stretch at 1-180 (MSVDVQRITD…LPDLLSALVQ (180 aa)) folds into the ABC transmembrane type-1 1 domain. Helical transmembrane passes span 11 to 31 (FIWY…AIYI), 36 to 56 (LGLG…CNYP), 125 to 145 (FILW…CMLM), and 151 to 171 (AGAV…IFGL). Positions 214–437 (VEIENGAFSW…NIGFEVLTQC (224 aa)) constitute an ABC transporter 1 domain. 249-256 (GAVGSGKS) is an ATP binding site. The next 5 helical transmembrane spans lie at 481 to 503 (LLVP…SNYW), 523 to 543 (ILLV…ARTI), 595 to 615 (MAVK…TIFV), 714 to 734 (LSHF…EGVI), and 738 to 758 (IAGL…TVIW). Positions 483–765 (VPFIILAQSC…VIWNICNAEN (283 aa)) constitute an ABC transmembrane type-1 2 domain. Residues 804 to 1036 (FRDLQVRYAE…EDSFFSKLIK (233 aa)) enclose the ABC transporter 2 domain. 836 to 843 (GRTGSGKS) lines the ATP pocket.

It belongs to the ABC transporter superfamily. ABCC family. Conjugate transporter (TC 3.A.1.208) subfamily.

It localises to the membrane. It carries out the reaction ATP + H2O + xenobioticSide 1 = ADP + phosphate + xenobioticSide 2.. In terms of biological role, pump for glutathione S-conjugates. The protein is Putative ABC transporter C family member 15 (ABCC15) of Arabidopsis thaliana (Mouse-ear cress).